The primary structure comprises 165 residues: Phosphopantetheine adenylyltransferase (165 aa).

Ser10 is a binding site for substrate. ATP-binding positions include 10–11 and His18; that span reads SF. Substrate is bound by residues Lys42, Leu74, and Arg88. ATP is bound by residues 89–91, Glu99, and 124–130; these read GLR and WFYTSST.

Belongs to the bacterial CoaD family. As to quaternary structure, homohexamer. Mg(2+) is required as a cofactor.

It localises to the cytoplasm. It carries out the reaction (R)-4'-phosphopantetheine + ATP + H(+) = 3'-dephospho-CoA + diphosphate. It participates in cofactor biosynthesis; coenzyme A biosynthesis; CoA from (R)-pantothenate: step 4/5. Reversibly transfers an adenylyl group from ATP to 4'-phosphopantetheine, yielding dephospho-CoA (dPCoA) and pyrophosphate. The sequence is that of Phosphopantetheine adenylyltransferase from Syntrophus aciditrophicus (strain SB).